We begin with the raw amino-acid sequence, 234 residues long: Octanoyltransferase (234 aa).

Residues 42-226 form the BPL/LPL catalytic domain; that stretch reads PDTPDEFWVV…ELASLIGYET (185 aa). Residues 81 to 88, 157 to 159, and 170 to 172 contribute to the substrate site; these read RGGQVTYH, SLG, and GLA. The active-site Acyl-thioester intermediate is the Cys-188.

Belongs to the LipB family.

The protein localises to the cytoplasm. The enzyme catalyses octanoyl-[ACP] + L-lysyl-[protein] = N(6)-octanoyl-L-lysyl-[protein] + holo-[ACP] + H(+). It participates in protein modification; protein lipoylation via endogenous pathway; protein N(6)-(lipoyl)lysine from octanoyl-[acyl-carrier-protein]: step 1/2. Its function is as follows. Catalyzes the transfer of endogenously produced octanoic acid from octanoyl-acyl-carrier-protein onto the lipoyl domains of lipoate-dependent enzymes. Lipoyl-ACP can also act as a substrate although octanoyl-ACP is likely to be the physiological substrate. This is Octanoyltransferase from Aeromonas hydrophila subsp. hydrophila (strain ATCC 7966 / DSM 30187 / BCRC 13018 / CCUG 14551 / JCM 1027 / KCTC 2358 / NCIMB 9240 / NCTC 8049).